The following is a 182-amino-acid chain: Putative colanic acid biosynthesis acetyltransferase WcaF (182 aa).

This sequence belongs to the transferase hexapeptide repeat family.

Its pathway is slime biogenesis; slime polysaccharide biosynthesis. The polypeptide is Putative colanic acid biosynthesis acetyltransferase WcaF (wcaF) (Shigella flexneri).